The primary structure comprises 372 residues: Queuine tRNA-ribosyltransferase (372 aa).

The Proton acceptor role is filled by Asp89. Substrate contacts are provided by residues 89-93 (DSGGF), Asp161, and Gly232. The tract at residues 262-268 (GIGDLPS) is RNA binding. Asp281 serves as the catalytic Nucleophile. Positions 286–290 (TKAAR) are RNA binding; important for wobble base 34 recognition. Zn(2+) contacts are provided by Cys319, Cys321, Cys324, and His351.

Belongs to the queuine tRNA-ribosyltransferase family. In terms of assembly, homodimer. Within each dimer, one monomer is responsible for RNA recognition and catalysis, while the other monomer binds to the replacement base PreQ1. It depends on Zn(2+) as a cofactor.

The catalysed reaction is 7-aminomethyl-7-carbaguanine + guanosine(34) in tRNA = 7-aminomethyl-7-carbaguanosine(34) in tRNA + guanine. Its pathway is tRNA modification; tRNA-queuosine biosynthesis. Functionally, catalyzes the base-exchange of a guanine (G) residue with the queuine precursor 7-aminomethyl-7-deazaguanine (PreQ1) at position 34 (anticodon wobble position) in tRNAs with GU(N) anticodons (tRNA-Asp, -Asn, -His and -Tyr). Catalysis occurs through a double-displacement mechanism. The nucleophile active site attacks the C1' of nucleotide 34 to detach the guanine base from the RNA, forming a covalent enzyme-RNA intermediate. The proton acceptor active site deprotonates the incoming PreQ1, allowing a nucleophilic attack on the C1' of the ribose to form the product. After dissociation, two additional enzymatic reactions on the tRNA convert PreQ1 to queuine (Q), resulting in the hypermodified nucleoside queuosine (7-(((4,5-cis-dihydroxy-2-cyclopenten-1-yl)amino)methyl)-7-deazaguanosine). The chain is Queuine tRNA-ribosyltransferase from Chlamydia trachomatis serovar L2 (strain ATCC VR-902B / DSM 19102 / 434/Bu).